A 233-amino-acid chain; its full sequence is MVNIPPAEELAGRVAVVIDVLRATTTICTALANGADTVVPILSPEEAFQVARDNPDRQFLLGGERKAVLIPGFHCDNSPLEYTEARVKGRPILFTTTNGTRAIRRAAGADRVYIASLLNAPAVGRELARLEVDVAICCAGTHDQFSLEDTVCAGAILEYMAGPDRPVETNDMGLVARELFRRYDGRLADLLHLSSHGQNLVRLGMQDDLLFCAQLGTLTILPVFTEGQVVLLE.

Belongs to the ComB family. Mg(2+) is required as a cofactor.

The enzyme catalyses (2R)-O-phospho-3-sulfolactate + H2O = (2R)-3-sulfolactate + phosphate. This is Probable 2-phosphosulfolactate phosphatase from Symbiobacterium thermophilum (strain DSM 24528 / JCM 14929 / IAM 14863 / T).